Reading from the N-terminus, the 39-residue chain is Protein MchX (39 aa).

The helical transmembrane segment at 15-37 (SALSSTLLLSLIMSATLLEYSLS) threads the bilayer.

It is found in the cell inner membrane. Its function is as follows. Required for microcin H47 production. Possibly involved in a regulatory loop modulating its own expression and that of MchI and MchB. This is Protein MchX (mchX) from Escherichia coli.